We begin with the raw amino-acid sequence, 220 residues long: Translation initiation factor 6 (220 aa).

Belongs to the eIF-6 family.

Binds to the 50S ribosomal subunit and prevents its association with the 30S ribosomal subunit to form the 70S initiation complex. The polypeptide is Translation initiation factor 6 (Methanoculleus marisnigri (strain ATCC 35101 / DSM 1498 / JR1)).